The sequence spans 86 residues: Large ribosomal subunit protein uL23 (86 aa).

Belongs to the universal ribosomal protein uL23 family. In terms of assembly, part of the 50S ribosomal subunit. Contacts protein L29.

Its function is as follows. Binds to 23S rRNA. One of the proteins that surrounds the polypeptide exit tunnel on the outside of the ribosome. The sequence is that of Large ribosomal subunit protein uL23 from Methanothermobacter thermautotrophicus (strain ATCC 29096 / DSM 1053 / JCM 10044 / NBRC 100330 / Delta H) (Methanobacterium thermoautotrophicum).